The primary structure comprises 587 residues: Ankyrin repeat and SOCS box protein 14 (587 aa).

ANK repeat units lie at residues 81 to 110, 116 to 145, 149 to 178, 182 to 211, 215 to 244, 248 to 277, 281 to 310, 313 to 342, 355 to 384, 385 to 414, and 416 to 449; these read NGWL…PSTW, NGET…NPNA, EGNS…DVNL, NERT…YPDA, YGFT…DVHS, DSSS…DANI, SGHL…IAAI, SGIS…DVNF, QRKS…LPNQ, DPVN…NVNY, and CRVN…DTER. Residues 521–576 enclose the SOCS box domain; the sequence is WPEIHFILANPRSLQHLCRLKIRKCMGRLRLRCPVFMSFLPLPNLLKAYVLYKEYD.

This sequence belongs to the ankyrin SOCS box (ASB) family. Interacts with MAPRE2; this interaction promotes MAPRE2 degradation.

The protein operates within protein modification; protein ubiquitination. Functionally, may be a substrate-recognition component of a SCF-like ECS (Elongin-Cullin-SOCS-box protein) E3 ubiquitin-protein ligase complex which mediates the ubiquitination and subsequent proteasomal degradation of target proteins. Plays a role in the inhibition of cardiomyocyte nuclear proliferation by mediating the ubiquitination and degradation of MAPRE2. The protein is Ankyrin repeat and SOCS box protein 14 (Asb14) of Mus musculus (Mouse).